The following is a 545-amino-acid chain: Baeyer-Villiger monooxygenase (545 aa).

Positions 24, 45, 54, 65, 71, and 118 each coordinate FAD.

This sequence belongs to the FAD-binding monooxygenase family. It depends on FAD as a cofactor.

Its function is as follows. Catalyzes a Baeyer-Villiger oxidation reaction, i.e. the insertion of an oxygen atom into a carbon-carbon bond adjacent to a carbonyl, which converts ketones to esters or lactones using NADPH as an electron donor. Besides cycloalkanones, can use cyclic alpha,beta-unsaturated ketones as substrates, leading to conjugated ene-lactones. Can also act on methylated cycloalkanones and methylated cycloalkenones with high enantioselectivity in some cases. This is Baeyer-Villiger monooxygenase from Pseudooceanicola batsensis (strain ATCC BAA-863 / DSM 15984 / KCTC 12145 / HTCC2597) (Oceanicola batsensis).